Here is a 434-residue protein sequence, read N- to C-terminus: Prenyltransferase penG (434 aa).

Composition is skewed to polar residues over residues 1-14 (MTQD…QTAG) and 21-35 (THSN…PSTW). Positions 1 to 35 (MTQDVVTVSSQTAGTIKESGTHSNPDNKTTSPSTW) are disordered. L-tryptophan-binding positions include 104 to 105 (EI) and glutamate 108. Substrate-binding residues include arginine 122, lysine 208, arginine 275, lysine 277, tyrosine 279, and tyrosine 348.

This sequence belongs to the tryptophan dimethylallyltransferase family.

It carries out the reaction yaequinolone E + dimethylallyl diphosphate + H2O = [(1'E)-3'-hydroxy-3',7'-dimethylocta-1',6'-dien-1'-yl]-quinolinone B + diphosphate. The protein operates within secondary metabolite biosynthesis. Its pathway is alkaloid biosynthesis. It participates in mycotoxin biosynthesis. In terms of biological role, prenyltransferase; part of the gene cluster that mediates the biosynthesis of penigequinolones, potent insecticidal alkaloids that contain a highly modified 10-carbon prenyl group. The first stage is catalyzed by the nonribosomal peptide synthetase penN that condenses anthranilic acid and O-methyl-L-tyrosine to produce 4'-methoxycyclopeptin. 4'-methoxycyclopeptin is then converted to 4'-methoxydehydrocyclopeptin by the ketoglutarate-dependent dioxygenase penM through dehydrogenation to form a double bond between C-alpha and C-beta of the O-methyltyrosine side chain. PenM also converts its first product methoxydehydrocyclopeptin to 4'-methoxycyclopenin. The following conversion of 4'methoxycyclopenin into 4'-methoxyviridicatin is catalyzed by the cyclopenase penL. 4'-methoxyviridicatin is the precursor of quinolone natural products, and is further converted to quinolinone B. The prenyltransferase penI then catalyzes the canonical Friedel-Crafts alkylation of quinolinone B with dimethylallyl cation to yield dimethylallyl quinolone, which is subjected to FAD-dependent dehydrogenation by the FAD-linked oxidoreductase penH to yield conjugated aryl diene. The delta(3') double bond then serves as the site of the second alkylation with DMAPP catalyzed by the prenyltransferase penG to yield a carbenium ion intermediate, which can be attacked by H(2)O to yield a styrenyl quinolone containing a C3'-hydroxyprenyl chain, or undergo cyclization to yield yaequinolones J1 and J2. The conversion of the styrenyl quinolone into the tetrahydrofuran-containing yaequinolone C is performed by the FAD-dependent monooxygenase penE and involves epoxidation of the terminal C7'-C8' olefin, followed by epoxide ring opening initiated by the C3' hydroxyl group. The predicted cysteine hydrolase penJ acts as an epoxide hydrolase that enhances the rate of the 5-exo-tet cyclization step, increasing the yield of yaequinolone C. PenF catalyzes the cationic rearrangement of the epoxide formed by penE (before ring opening to produce yaequinolone C) into yaequinolone D. Finally, the short-chain dehydrogenase/reductase (SDR)-like reductase penD, catalyzes both the dehydration of yaequinolone D and the reduction of the resulting oxonium to yield penigequinolone. This Penicillium thymicola protein is Prenyltransferase penG.